Here is a 94-residue protein sequence, read N- to C-terminus: PqqA binding protein (94 aa).

Belongs to the PqqD family. As to quaternary structure, monomer. Interacts with PqqE.

Its pathway is cofactor biosynthesis; pyrroloquinoline quinone biosynthesis. Functionally, functions as a PqqA binding protein and presents PqqA to PqqE, in the pyrroloquinoline quinone (PQQ) biosynthetic pathway. This chain is PqqA binding protein, found in Acinetobacter baumannii (strain SDF).